A 455-amino-acid chain; its full sequence is Venom prothrombin activator hopsarin-D (455 aa).

Residues 1-20 (MAPQLLLCLILTFLWSVPEA) form the signal peptide. Residues 21-40 (ESNVFLKSKVANRFLQRTKR) constitute a propeptide that is removed on maturation. In terms of domain architecture, Gla spans 41-86 (SNSLFEEIRPGNIERECIEEKCSKEEAREVFEDNEKTETFWNVYVD). Glu-46, Glu-47, Glu-54, Glu-56, Glu-59, Glu-60, Glu-65, Glu-66, Glu-69, Glu-72, and Glu-75 each carry 4-carboxyglutamate. Cys-57 and Cys-62 are disulfide-bonded. The EGF-like 1; calcium-binding domain maps to 86–121 (DGDQCSSNPCHYHGTCKDGIGSYTCTCLPNYEGKNC). 10 cysteine pairs are disulfide-bonded: Cys-90-Cys-101, Cys-95-Cys-110, Cys-112-Cys-121, Cys-129-Cys-140, Cys-136-Cys-149, Cys-151-Cys-164, Cys-172-Cys-328, Cys-236-Cys-252, Cys-376-Cys-390, and Cys-401-Cys-429. Ser-92 carries an O-linked (Hex...) serine glycan. Positions 129–164 (CRAFNGNCWHFCKRVQSETQCSCAESYRLGVDGHSC) constitute an EGF-like 2 domain. Residues 182–209 (REASLPDFVQSQKATLLKKSDNPSPDIR) constitute a propeptide, activation peptide. The region spanning 210–453 (IVNGMDSKLG…FIPWIKKIMS (244 aa)) is the Peptidase S1 domain. His-251 serves as the catalytic Charge relay system. Asn-254 is a glycosylation site (N-linked (GlcNAc...) asparagine). Catalysis depends on Asp-308, which acts as the Charge relay system. Catalysis depends on Ser-405, which acts as the Charge relay system.

It belongs to the peptidase S1 family. Snake venom subfamily. In terms of assembly, heterodimer of a light chain and a heavy chain; disulfide-linked. In terms of processing, the vitamin K-dependent, enzymatic carboxylation of some glutamate residues allows the modified protein to bind calcium. As to expression, expressed by the venom gland.

The protein localises to the secreted. The enzyme catalyses Selective cleavage of Arg-|-Thr and then Arg-|-Ile bonds in prothrombin to form thrombin.. Its function is as follows. Snake prothrombin activator that attacks the hemostatic system of prey. This protein is functionally similar to blood coagulation factor Xa. The procoagulant activity of hopsarin-D is approximately 10-fold lower than that of trocarin-D and FXa. This Hoplocephalus stephensii (Stephens's banded snake) protein is Venom prothrombin activator hopsarin-D.